The primary structure comprises 118 residues: MRNRYIESFEKAQIADKNIPQFKAGDTLRVGVKIQEGDKTRVQNFEGICISVRGTGTGKTFTIRKMGANNVGVERIFPLYSDSLESVTLLRVGRVRRAKLYYLRDRSGKSARIKELRK.

Belongs to the bacterial ribosomal protein bL19 family.

In terms of biological role, this protein is located at the 30S-50S ribosomal subunit interface and may play a role in the structure and function of the aminoacyl-tRNA binding site. This Wolinella succinogenes (strain ATCC 29543 / DSM 1740 / CCUG 13145 / JCM 31913 / LMG 7466 / NCTC 11488 / FDC 602W) (Vibrio succinogenes) protein is Large ribosomal subunit protein bL19.